Reading from the N-terminus, the 220-residue chain is Probable N-acetyl-alpha-D-glucosaminyl L-malate deacetylase 2 (220 aa).

The Zn(2+) site is built by histidine 11, aspartate 14, and histidine 125.

It belongs to the PIGL family. Zn(2+) is required as a cofactor.

It catalyses the reaction (S)-malyl N-acetyl-alpha-D-glucosaminide + H2O = (S)-malyl alpha-D-glucosaminide + acetate. Involved in bacillithiol (BSH) biosynthesis. Catalyzes the second step of the pathway, the deacetylation of N-acetylglucosaminylmalate (GlcNAc-Mal) to glucosamine malate (GlcN-Mal). Has weak activity compared with bshB1. This chain is Probable N-acetyl-alpha-D-glucosaminyl L-malate deacetylase 2, found in Bacillus cereus (strain ATCC 14579 / DSM 31 / CCUG 7414 / JCM 2152 / NBRC 15305 / NCIMB 9373 / NCTC 2599 / NRRL B-3711).